The following is a 200-amino-acid chain: 3-isopropylmalate dehydratase small subunit (200 aa).

It belongs to the LeuD family. LeuD type 1 subfamily. As to quaternary structure, heterodimer of LeuC and LeuD.

It carries out the reaction (2R,3S)-3-isopropylmalate = (2S)-2-isopropylmalate. It functions in the pathway amino-acid biosynthesis; L-leucine biosynthesis; L-leucine from 3-methyl-2-oxobutanoate: step 2/4. Functionally, catalyzes the isomerization between 2-isopropylmalate and 3-isopropylmalate, via the formation of 2-isopropylmaleate. This is 3-isopropylmalate dehydratase small subunit from Pseudarthrobacter chlorophenolicus (strain ATCC 700700 / DSM 12829 / CIP 107037 / JCM 12360 / KCTC 9906 / NCIMB 13794 / A6) (Arthrobacter chlorophenolicus).